The sequence spans 308 residues: MNSESQPTIITLMGPTASGKTALAMALAEQHNCEIISVDSALIYRDMDIGSAKPTQEELSRAPHRLIDIRDPSESYSAADFRSDAIANIEAILAAGKTPLLVGGTMLYFKALLEGLSPLPSADEAIRAEIAKEVEAKGWQALHDELRQIDPVSADRIHPNDPQRLSRAIEVYRISGKSLTELTQVKAEALPYKVVQFGIAPKDRKVLHLAIAERFKLMLNQGFVEEVQRLKARADLHLDLPSMRCVGYRQVWQYLDGEYDYDTMVEKSIVATRQLAKRQLTWLRGWADLNWLESGDESNLARLLEHCR.

14 to 21 contacts ATP; that stretch reads GPTASGKT. 16–21 contributes to the substrate binding site; sequence TASGKT. 3 interaction with substrate tRNA regions span residues 39 to 42, 163 to 167, and 244 to 249; these read DSAL, QRLSR, and RCVGYR.

It belongs to the IPP transferase family. As to quaternary structure, monomer. Mg(2+) serves as cofactor.

It catalyses the reaction adenosine(37) in tRNA + dimethylallyl diphosphate = N(6)-dimethylallyladenosine(37) in tRNA + diphosphate. In terms of biological role, catalyzes the transfer of a dimethylallyl group onto the adenine at position 37 in tRNAs that read codons beginning with uridine, leading to the formation of N6-(dimethylallyl)adenosine (i(6)A). The protein is tRNA dimethylallyltransferase of Shewanella loihica (strain ATCC BAA-1088 / PV-4).